The sequence spans 446 residues: Tripartite motif-containing protein 43C (446 aa).

The RING-type zinc finger occupies 16-57 (CSICQGIFMDPVYLRCGHKFCETCLLLFQEDIKFPAYCPTCR). Residues 88–129 (SEEHKCVTHKAKKMIFCDKSKILLCHLCSDSQEHSGHTHCSI) form a B box-type zinc finger. Zn(2+)-binding residues include Cys-93, His-96, Cys-115, and His-121. The B30.2/SPRY domain occupies 271–446 (RLRAHSIPGL…VRPFFFAAYT (176 aa)).

It belongs to the TRIM/RBCC family.

The polypeptide is Tripartite motif-containing protein 43C (Mus musculus (Mouse)).